The primary structure comprises 295 residues: 4-hydroxy-tetrahydrodipicolinate synthase (295 aa).

Position 47 (T47) interacts with pyruvate. Y135 acts as the Proton donor/acceptor in catalysis. K163 (schiff-base intermediate with substrate) is an active-site residue. Pyruvate is bound at residue I204.

This sequence belongs to the DapA family. In terms of assembly, homotetramer; dimer of dimers.

It is found in the cytoplasm. It catalyses the reaction L-aspartate 4-semialdehyde + pyruvate = (2S,4S)-4-hydroxy-2,3,4,5-tetrahydrodipicolinate + H2O + H(+). The protein operates within amino-acid biosynthesis; L-lysine biosynthesis via DAP pathway; (S)-tetrahydrodipicolinate from L-aspartate: step 3/4. Functionally, catalyzes the condensation of (S)-aspartate-beta-semialdehyde [(S)-ASA] and pyruvate to 4-hydroxy-tetrahydrodipicolinate (HTPA). The protein is 4-hydroxy-tetrahydrodipicolinate synthase of Caldicellulosiruptor saccharolyticus (strain ATCC 43494 / DSM 8903 / Tp8T 6331).